Here is a 668-residue protein sequence, read N- to C-terminus: Potassium-transporting ATPase ATP-binding subunit (668 aa).

4 helical membrane-spanning segments follow: residues 31-51, 62-82, 213-233, and 243-263; these read MFLT…PSFF, FYVA…ISTA, TVFL…IFAI, and IVML…ALLP. Aspartate 298 serves as the catalytic 4-aspartylphosphate intermediate. Residues aspartate 335, glutamate 339, 367-374, and lysine 385 each bind ATP; that span reads FSSETKFS. Residues aspartate 504 and aspartate 508 each contribute to the Mg(2+) site. 3 helical membrane-spanning segments follow: residues 573–593, 599–619, and 644–664; these read YFVI…VNIL, IVAV…LIPL, and IGGV…LIAW.

This sequence belongs to the cation transport ATPase (P-type) (TC 3.A.3) family. Type IA subfamily. As to quaternary structure, the system is composed of three essential subunits: KdpA, KdpB and KdpC.

The protein localises to the cell membrane. It catalyses the reaction K(+)(out) + ATP + H2O = K(+)(in) + ADP + phosphate + H(+). Functionally, part of the high-affinity ATP-driven potassium transport (or Kdp) system, which catalyzes the hydrolysis of ATP coupled with the electrogenic transport of potassium into the cytoplasm. This subunit is responsible for energy coupling to the transport system and for the release of the potassium ions to the cytoplasm. In Thermoplasma volcanium (strain ATCC 51530 / DSM 4299 / JCM 9571 / NBRC 15438 / GSS1), this protein is Potassium-transporting ATPase ATP-binding subunit.